Reading from the N-terminus, the 141-residue chain is MSRAHHQQGGAPSQRMLRVAELIRHTLSDLLSRSIVNDPVLEGHVITVPDVRMSPDLKLATAFVMPLGGKDINSVIEALDRHKKFLRSEIAQRIHLRFAPDIRFKADESFDYGDKIDALLASPQVRRDLDATHTETQKAAD.

The protein belongs to the RbfA family. Monomer. Binds 30S ribosomal subunits, but not 50S ribosomal subunits or 70S ribosomes.

It is found in the cytoplasm. Its function is as follows. One of several proteins that assist in the late maturation steps of the functional core of the 30S ribosomal subunit. Associates with free 30S ribosomal subunits (but not with 30S subunits that are part of 70S ribosomes or polysomes). Required for efficient processing of 16S rRNA. May interact with the 5'-terminal helix region of 16S rRNA. This Beijerinckia indica subsp. indica (strain ATCC 9039 / DSM 1715 / NCIMB 8712) protein is Ribosome-binding factor A.